A 67-amino-acid polypeptide reads, in one-letter code: Probable Sec-independent protein translocase protein TatE (67 aa).

The helical transmembrane segment at 4–21 (ISITKLLVVAALVVLLFG) threads the bilayer.

Belongs to the TatA/E family. TatE subfamily.

The protein resides in the cell inner membrane. In terms of biological role, part of the twin-arginine translocation (Tat) system that transports large folded proteins containing a characteristic twin-arginine motif in their signal peptide across membranes. TatE shares overlapping functions with TatA. In Shigella flexneri, this protein is Probable Sec-independent protein translocase protein TatE.